Consider the following 355-residue polypeptide: 3-dehydroquinate synthase (355 aa).

Residues 71-76, 105-109, 129-130, Lys142, and Lys151 each bind NAD(+); these read EGEASK, GVVGD, and TS. The Zn(2+) site is built by Glu184, His246, and His263.

The protein belongs to the sugar phosphate cyclases superfamily. Dehydroquinate synthase family. The cofactor is Co(2+). It depends on Zn(2+) as a cofactor. Requires NAD(+) as cofactor.

The protein resides in the cytoplasm. It catalyses the reaction 7-phospho-2-dehydro-3-deoxy-D-arabino-heptonate = 3-dehydroquinate + phosphate. The protein operates within metabolic intermediate biosynthesis; chorismate biosynthesis; chorismate from D-erythrose 4-phosphate and phosphoenolpyruvate: step 2/7. Its function is as follows. Catalyzes the conversion of 3-deoxy-D-arabino-heptulosonate 7-phosphate (DAHP) to dehydroquinate (DHQ). This Streptococcus gordonii (strain Challis / ATCC 35105 / BCRC 15272 / CH1 / DL1 / V288) protein is 3-dehydroquinate synthase.